Here is a 367-residue protein sequence, read N- to C-terminus: DNA replication and repair protein RecF (367 aa).

ATP is bound at residue 30–37; that stretch reads GNNAQGKT.

Belongs to the RecF family.

The protein resides in the cytoplasm. The RecF protein is involved in DNA metabolism; it is required for DNA replication and normal SOS inducibility. RecF binds preferentially to single-stranded, linear DNA. It also seems to bind ATP. The polypeptide is DNA replication and repair protein RecF (Clostridium tetani (strain Massachusetts / E88)).